A 63-amino-acid polypeptide reads, in one-letter code: Small ribosomal subunit protein eS30 (63 aa).

The tract at residues 1 to 33 (MGKVHGSLARAGKVKSQTPKVEKQEKPKKPQGR) is disordered.

It belongs to the eukaryotic ribosomal protein eS30 family. As to quaternary structure, component of the small ribosomal subunit. Mature ribosomes consist of a small (40S) and a large (60S) subunit. The 40S subunit contains about 32 different proteins and 1 molecule of RNA (18S). The 60S subunit contains 45 different proteins and 3 molecules of RNA (25S, 5.8S and 5S).

The protein resides in the cytoplasm. Functionally, component of the ribosome, a large ribonucleoprotein complex responsible for the synthesis of proteins in the cell. The small ribosomal subunit (SSU) binds messenger RNAs (mRNAs) and translates the encoded message by selecting cognate aminoacyl-transfer RNA (tRNA) molecules. The large subunit (LSU) contains the ribosomal catalytic site termed the peptidyl transferase center (PTC), which catalyzes the formation of peptide bonds, thereby polymerizing the amino acids delivered by tRNAs into a polypeptide chain. The nascent polypeptides leave the ribosome through a tunnel in the LSU and interact with protein factors that function in enzymatic processing, targeting, and the membrane insertion of nascent chains at the exit of the ribosomal tunnel. The chain is Small ribosomal subunit protein eS30 (RPS30) from Candida albicans (strain SC5314 / ATCC MYA-2876) (Yeast).